Here is a 231-residue protein sequence, read N- to C-terminus: Ion-translocating oxidoreductase complex subunit E (231 aa).

6 helical membrane passes run 18 to 38, 39 to 59, 63 to 83, 86 to 106, 125 to 145, and 182 to 202; these read ALVQ…ATNA, LGLG…ISTL, TPAE…VSAV, LINA…PLIV, ALSA…MFVL, and PFLL…MLAG.

The protein belongs to the NqrDE/RnfAE family. As to quaternary structure, the complex is composed of six subunits: RsxA, RsxB, RsxC, RsxD, RsxE and RsxG.

The protein resides in the cell inner membrane. Functionally, part of a membrane-bound complex that couples electron transfer with translocation of ions across the membrane. Required to maintain the reduced state of SoxR. The chain is Ion-translocating oxidoreductase complex subunit E from Shigella boydii serotype 18 (strain CDC 3083-94 / BS512).